The chain runs to 313 residues: Aspartate carbamoyltransferase catalytic subunit (313 aa).

Carbamoyl phosphate contacts are provided by R51 and T52. K80 provides a ligand contact to L-aspartate. R101, H129, and Q132 together coordinate carbamoyl phosphate. Positions 162 and 224 each coordinate L-aspartate. Residues L263 and P264 each coordinate carbamoyl phosphate.

Belongs to the aspartate/ornithine carbamoyltransferase superfamily. ATCase family. As to quaternary structure, heterododecamer (2C3:3R2) of six catalytic PyrB chains organized as two trimers (C3), and six regulatory PyrI chains organized as three dimers (R2).

The enzyme catalyses carbamoyl phosphate + L-aspartate = N-carbamoyl-L-aspartate + phosphate + H(+). Its pathway is pyrimidine metabolism; UMP biosynthesis via de novo pathway; (S)-dihydroorotate from bicarbonate: step 2/3. Functionally, catalyzes the condensation of carbamoyl phosphate and aspartate to form carbamoyl aspartate and inorganic phosphate, the committed step in the de novo pyrimidine nucleotide biosynthesis pathway. The sequence is that of Aspartate carbamoyltransferase catalytic subunit from Phocaeicola vulgatus (strain ATCC 8482 / DSM 1447 / JCM 5826 / CCUG 4940 / NBRC 14291 / NCTC 11154) (Bacteroides vulgatus).